A 166-amino-acid polypeptide reads, in one-letter code: Transcriptional repressor NrdR (166 aa).

A zinc finger spans residues 3 to 34; sequence CPFCRNPDSRVVDSRMADDGSSIRRRRQCPEC. The 91-residue stretch at 46 to 136 folds into the ATP-cone domain; that stretch reads LSVIKRSGVG…VYQAFESLED (91 aa).

This sequence belongs to the NrdR family. Zn(2+) is required as a cofactor.

Negatively regulates transcription of bacterial ribonucleotide reductase nrd genes and operons by binding to NrdR-boxes. The protein is Transcriptional repressor NrdR of Paenarthrobacter aurescens (strain TC1).